We begin with the raw amino-acid sequence, 273 residues long: Transcriptional regulator ICP22 homolog (273 aa).

2 disordered regions span residues 1–57 (GSCR…YGLP) and 160–273 (YEQR…SARR). The segment covering 11–33 (PSTSPIIPSLSPSSGGNPSPRSS) has biased composition (low complexity). Acidic residues-rich tracts occupy residues 178–194 (EECEVSGDESPSEEEEA) and 204–224 (SPEEESASSDFESFSDEEDDS). Residues 261 to 273 (VPKGGRPAKSARR) show a composition bias toward low complexity.

The protein belongs to the herpesviridae ICP22 family.

The chain is Transcriptional regulator ICP22 homolog from Equus caballus (Horse).